The sequence spans 525 residues: Ribosomal protein S6 kinase beta-1 (525 aa).

The tract at residues 1–54 is disordered; the sequence is MRRRRRRDGFYPAPDFRDREAEDMAGVFDIDLDQPEDAGSEDELEEGGQLNESM. The short motif at 28-32 is the TOS motif element; sequence FDIDL. The span at 30-46 shows a compositional bias: acidic residues; sequence IDLDQPEDAGSEDELEE. Residues 91 to 352 form the Protein kinase domain; sequence FELLRVLGKG…AGEVQAHPFF (262 aa). ATP contacts are provided by residues 97–105 and Lys-123; that span reads LGKGGYGKV. The active-site Proton acceptor is the Asp-218. The residue at position 252 (Thr-252) is a Phosphothreonine; by PDPK1. Positions 353-423 constitute an AGC-kinase C-terminal domain; it reads RHINWEELLA…VAPSVLESVK (71 aa). Positions 380 to 399 are disordered; it reads SQFDSKFTRQTPVDSPDDST. Over residues 381–399 the composition is skewed to polar residues; that stretch reads QFDSKFTRQTPVDSPDDST. Ser-394 carries the phosphoserine modification. A Phosphothreonine; by MTOR, NEK6 and NEK7 modification is found at Thr-412. Positions 424-525 are autoinhibitory domain; it reads EKFSFEPKIR…KRPEHLRMNL (102 aa). Ser-434 and Ser-441 each carry phosphoserine. Residue Thr-444 is modified to Phosphothreonine. Phosphoserine is present on residues Ser-447 and Ser-452. Residues 486-509 form a disordered region; sequence VTTSGEASAPLPIRQPNSGPYKKQ. N6-acetyllysine is present on Lys-516.

This sequence belongs to the protein kinase superfamily. AGC Ser/Thr protein kinase family. S6 kinase subfamily. As to quaternary structure, interacts with PPP1R9A/neurabin-1. Interacts with RPTOR. Interacts with IRS1. Interacts with EIF3B and EIF3C. Interacts with TRAF4. Interacts with POLDIP3. Interacts (via N-terminus) with IER5. In terms of processing, phosphorylation at Thr-412 is regulated by mTORC1. The phosphorylation at this site is maintained by an agonist-dependent autophosphorylation mechanism. Activated by phosphorylation at Thr-252 by PDPK1. Dephosphorylation by PPP1CC at Thr-412 in mitochondrion.

It localises to the cytoplasm. It is found in the synapse. The protein resides in the synaptosome. Its subcellular location is the mitochondrion outer membrane. The protein localises to the mitochondrion. It carries out the reaction L-seryl-[protein] + ATP = O-phospho-L-seryl-[protein] + ADP + H(+). It catalyses the reaction L-threonyl-[protein] + ATP = O-phospho-L-threonyl-[protein] + ADP + H(+). With respect to regulation, activation requires multiple phosphorylation events on serine/threonine residues. Activation appears to be first mediated by phosphorylation of multiple sites in the autoinhibitory domain, which facilitates phosphorylation at Thr-412, disrupting the autoinhibitory mechanism and allowing phosphorylation of Thr-252 by PDPK1. The active conformation of the kinase is believed to be stabilized by a mechanism involving three conserved phosphorylation sites located in the kinase domain activation loop (Thr-252) and in the AGC-kinase C-terminal domain (Ser-394 in the middle of the tail/linker region and Thr-412 within a hydrophobic motif at its end). Activated by mTORC1; isoform Alpha I and isoform Alpha II are sensitive to rapamycin, which inhibits activating phosphorylation at Thr-412. Activated by PDPK1. In terms of biological role, serine/threonine-protein kinase that acts downstream of mTOR signaling in response to growth factors and nutrients to promote cell proliferation, cell growth and cell cycle progression. Regulates protein synthesis through phosphorylation of EIF4B, RPS6 and EEF2K, and contributes to cell survival by repressing the pro-apoptotic function of BAD. Under conditions of nutrient depletion, the inactive form associates with the EIF3 translation initiation complex. Upon mitogenic stimulation, phosphorylation by the mechanistic target of rapamycin complex 1 (mTORC1) leads to dissociation from the EIF3 complex and activation. The active form then phosphorylates and activates several substrates in the pre-initiation complex, including the EIF2B complex and the cap-binding complex component EIF4B. Also controls translation initiation by phosphorylating a negative regulator of EIF4A, PDCD4, targeting it for ubiquitination and subsequent proteolysis. Promotes initiation of the pioneer round of protein synthesis by phosphorylating POLDIP3/SKAR. In response to IGF1, activates translation elongation by phosphorylating EEF2 kinase (EEF2K), which leads to its inhibition and thus activation of EEF2. Also plays a role in feedback regulation of mTORC2 by mTORC1 by phosphorylating MAPKAP1/SIN1, MTOR and RICTOR, resulting in the inhibition of mTORC2 and AKT1 signaling. Also involved in feedback regulation of mTORC1 and mTORC2 by phosphorylating DEPTOR. Mediates cell survival by phosphorylating the pro-apoptotic protein BAD and suppressing its pro-apoptotic function. Phosphorylates mitochondrial URI1 leading to dissociation of a URI1-PPP1CC complex. The free mitochondrial PPP1CC can then dephosphorylate RPS6KB1 at Thr-412, which is proposed to be a negative feedback mechanism for the RPS6KB1 anti-apoptotic function. Mediates TNF-alpha-induced insulin resistance by phosphorylating IRS1 at multiple serine residues, resulting in accelerated degradation of IRS1. In cells lacking functional TSC1-2 complex, constitutively phosphorylates and inhibits GSK3B. May be involved in cytoskeletal rearrangement through binding to neurabin. Phosphorylates and activates the pyrimidine biosynthesis enzyme CAD, downstream of MTOR. Following activation by mTORC1, phosphorylates EPRS and thereby plays a key role in fatty acid uptake by adipocytes and also most probably in interferon-gamma-induced translation inhibition. The sequence is that of Ribosomal protein S6 kinase beta-1 (RPS6KB1) from Oryctolagus cuniculus (Rabbit).